The primary structure comprises 272 residues: Cyanophycinase (272 aa).

Catalysis depends on charge relay system residues serine 132, glutamate 150, and histidine 174.

Belongs to the peptidase S51 family.

The enzyme catalyses [L-4-(L-arginin-2-N-yl)aspartate](n) + H2O = [L-4-(L-arginin-2-N-yl)aspartate](n-1) + L-4-(L-arginin-2-N-yl)aspartate. Exopeptidase that catalyzes the hydrolytic cleavage of multi-L-arginyl-poly-L-aspartic acid (cyanophycin; a water-insoluble reserve polymer) into aspartate-arginine dipeptides. The protein is Cyanophycinase (cphB) of Geminocystis herdmanii (strain PCC 6308) (Synechocystis sp. (strain PCC 6308)).